Consider the following 189-residue polypeptide: MSLTELILLAIGLSMDASAVSISNSLCIKKIKIKHILQMAVMFAVFQGIMPLIGYYAANSFENVIERFDHWIAFILLVIIGGKMIHESITADEEQDCSLFSLTFKLLLVQAVATSIDALAVGVSLSALNVDILYSITIIGIVTFICCTAAILLANRFGNLLGKRAGIVGGLILVGIGVKIFVQHMFFGG.

The next 6 membrane-spanning stretches (helical) occupy residues 2–22, 36–56, 71–91, 106–126, 132–152, and 167–187; these read SLTE…AVSI, ILQM…IGYY, WIAF…SITA, LLLV…VSLS, ILYS…AAIL, and IVGG…HMFF.

This sequence belongs to the MntP (TC 9.B.29) family.

It localises to the cell membrane. Probably functions as a manganese efflux pump. This chain is Putative manganese efflux pump MntP, found in Ruminiclostridium cellulolyticum (strain ATCC 35319 / DSM 5812 / JCM 6584 / H10) (Clostridium cellulolyticum).